A 295-amino-acid polypeptide reads, in one-letter code: UDP-N-acetylenolpyruvoylglucosamine reductase (295 aa).

The 164-residue stretch at 26–189 (VGGRADVLFK…VEAEFKGVNS (164 aa)) folds into the FAD-binding PCMH-type domain. Arg-169 is an active-site residue. Cys-218 functions as the Proton donor in the catalytic mechanism. Glu-288 is an active-site residue.

It belongs to the MurB family. FAD is required as a cofactor.

It is found in the cytoplasm. The enzyme catalyses UDP-N-acetyl-alpha-D-muramate + NADP(+) = UDP-N-acetyl-3-O-(1-carboxyvinyl)-alpha-D-glucosamine + NADPH + H(+). Its pathway is cell wall biogenesis; peptidoglycan biosynthesis. Functionally, cell wall formation. This is UDP-N-acetylenolpyruvoylglucosamine reductase from Wolbachia pipientis wMel.